Reading from the N-terminus, the 595-residue chain is Tumor necrosis factor receptor superfamily member 8 (595 aa).

The first 18 residues, 1 to 18, serve as a signal peptide directing secretion; sequence MRVLLAALGLLFLGALRA. The Extracellular portion of the chain corresponds to 19-385; sequence FPQDRPFEDT…STGKPVLDAG (367 aa). TNFR-Cys repeat units follow at residues 28–66, 68–106, and 107–150; these read TCHG…TDCR, QCEP…SRVC, and ECRP…TVCE. Cystine bridges form between C29/C44, C45/C58, C48/C65, C69/C81, C84/C98, C87/C106, C108/C122, and C131/C149. N32 is a glycosylation site (N-linked (GlcNAc...) asparagine). An N-linked (GlcNAc...) asparagine glycan is attached at N101. The segment at 167–238 is disordered; the sequence is KEPSSGTIPQ…PTQPCPEGSG (72 aa). The segment covering 179-194 has biased composition (low complexity); that stretch reads PTPVSPATSSASTMPV. TNFR-Cys repeat units lie at residues 205–241, 243–281, and 282–325; these read ASKL…GDCR, QCEP…SRTC, and ECRP…TTFE. Intrachain disulfides connect C233/C240, C244/C256, C259/C273, C262/C281, C283/C297, and C289/C300. The N-linked (GlcNAc...) asparagine glycan is linked to N276. Positions 323-355 are disordered; that stretch reads TFEAPPLGTQPDCNPTPENGEAPASTSPTQSLL. A glycan (N-linked (GlcNAc...) asparagine) is linked at N336. Residues 346–355 are compositionally biased toward polar residues; that stretch reads ASTSPTQSLL. A helical transmembrane segment spans residues 386–406; sequence PVLFWVILVLVVVVGSSAFLL. Residues 407–595 are Cytoplasmic-facing; it reads CHRRACRKRI…DPLPTAASGK (189 aa). Residues S438 and S452 each carry the phosphoserine modification. Disordered stretches follow at residues 438–457, 485–509, and 536–595; these read SRPR…TEPV, LQDA…STEH, and EGRG…ASGK. Polar residues predominate over residues 443-452; sequence SSTQLRSGAS. Residues 499–509 are compositionally biased toward basic and acidic residues; sequence DLPEPRVSTEH.

The protein belongs to the TNFR8 family. Interacts with TRAF1, TRAF2, TRAF3 and TRAF5. Post-translationally, phosphorylated on serine and tyrosine residues. Isoform 2 is constitutively phosphorylated. As to expression, detected in alveolar macrophages (at protein level).

Its subcellular location is the cell membrane. It is found in the cytoplasm. In terms of biological role, receptor for TNFSF8/CD30L. May play a role in the regulation of cellular growth and transformation of activated lymphoblasts. Regulates gene expression through activation of NF-kappa-B. This chain is Tumor necrosis factor receptor superfamily member 8, found in Homo sapiens (Human).